The sequence spans 174 residues: ATP-dependent protease subunit HslV (174 aa).

The active site involves Thr-2. Gly-157, Cys-160, and Thr-163 together coordinate Na(+).

Belongs to the peptidase T1B family. HslV subfamily. A double ring-shaped homohexamer of HslV is capped on each side by a ring-shaped HslU homohexamer. The assembly of the HslU/HslV complex is dependent on binding of ATP.

The protein localises to the cytoplasm. It catalyses the reaction ATP-dependent cleavage of peptide bonds with broad specificity.. Its activity is regulated as follows. Allosterically activated by HslU binding. In terms of biological role, protease subunit of a proteasome-like degradation complex believed to be a general protein degrading machinery. The polypeptide is ATP-dependent protease subunit HslV (Shewanella frigidimarina (strain NCIMB 400)).